The sequence spans 118 residues: UPF0102 protein Cphy_2398 (118 aa).

Belongs to the UPF0102 family.

The sequence is that of UPF0102 protein Cphy_2398 from Lachnoclostridium phytofermentans (strain ATCC 700394 / DSM 18823 / ISDg) (Clostridium phytofermentans).